Here is a 307-residue protein sequence, read N- to C-terminus: Acyl transferase (307 aa).

Active-site charge relay system residues include Ser-116, Asp-213, and His-243.

This sequence belongs to the LuxD family.

Its pathway is lipid metabolism; fatty acid reduction for biolumincescence. Its function is as follows. Acyl transferase is part of the fatty acid reductase system required for aldehyde biosynthesis; it produces fatty acids for the luminescent reaction. The chain is Acyl transferase from Photorhabdus laumondii subsp. laumondii (strain DSM 15139 / CIP 105565 / TT01) (Photorhabdus luminescens subsp. laumondii).